Consider the following 128-residue polypeptide: Small nuclear ribonucleoprotein SmD3a (128 aa).

In terms of domain architecture, Sm spans 7-79 (IPVKLLHESS…VRFLVIPDML (73 aa)). The segment at 90–128 (GKGKSASLGVGRGRGAAMRAKGTGRGTGGGRGAVPPVRR) is disordered. Residues 112-121 (TGRGTGGGRG) are compositionally biased toward gly residues.

This sequence belongs to the snRNP core protein family. In terms of tissue distribution, expressed in young seedlings, roots, leaves, flowers and immature siliques.

Its subcellular location is the cytoplasm. It is found in the cytosol. The protein localises to the nucleus. Core component of the spliceosomal U1, U2, U4 and U5 small nuclear ribonucleoproteins (snRNPs), the building blocks of the spliceosome. May play a minor role in the splicing of cellular pre-mRNAs. This Arabidopsis thaliana (Mouse-ear cress) protein is Small nuclear ribonucleoprotein SmD3a.